The primary structure comprises 200 residues: Interferon lambda-2 (200 aa).

Residues 1-25 (MKLDMTGDCTPVLVLMAAVLTVTGA) form the signal peptide.

It belongs to the lambda interferon family.

The protein resides in the secreted. Its function is as follows. Cytokine with antiviral, antitumour and immunomodulatory activities. Plays a critical role in the antiviral host defense, predominantly in the epithelial tissues. Acts as a ligand for the heterodimeric class II cytokine receptor composed of IL10RB and IFNLR1, and receptor engagement leads to the activation of the JAK/STAT signaling pathway resulting in the expression of IFN-stimulated genes (ISG), which mediate the antiviral state. Has a restricted receptor distribution and therefore restricted targets: is primarily active in epithelial cells and this cell type-selective action is because of the epithelial cell-specific expression of its receptor IFNLR1. Seems not to be essential for early virus-activated host defense in vaginal infection, but plays an important role in Toll-like receptor (TLR)-induced antiviral defense. Plays a significant role in the antiviral immune defense in the intestinal epithelium. Exerts an immunomodulatory effect by up-regulating MHC class I antigen expression. The polypeptide is Interferon lambda-2 (IFNL2) (Homo sapiens (Human)).